The following is a 141-amino-acid chain: ATP synthase epsilon chain (141 aa).

The protein belongs to the ATPase epsilon chain family. As to quaternary structure, F-type ATPases have 2 components, CF(1) - the catalytic core - and CF(0) - the membrane proton channel. CF(1) has five subunits: alpha(3), beta(3), gamma(1), delta(1), epsilon(1). CF(0) has three main subunits: a, b and c.

Its subcellular location is the cell membrane. Functionally, produces ATP from ADP in the presence of a proton gradient across the membrane. The polypeptide is ATP synthase epsilon chain (Lactococcus lactis subsp. cremoris (strain SK11)).